Reading from the N-terminus, the 269-residue chain is Proline-rich protein 7 (269 aa).

The Extracellular portion of the chain corresponds to 1-9; it reads MVMSQGTYT. The interval 1–44 is required for interaction with NMDA receptors; it reads MVMSQGTYTFLTCFAGFWLIWGLIVLLCCFCSFLRRRLKRRQEE. The segment at 2 to 39 is required for membrane localization; the sequence is VMSQGTYTFLTCFAGFWLIWGLIVLLCCFCSFLRRRLK. The helical; Signal-anchor for type III membrane protein transmembrane segment at 10–30 threads the bilayer; it reads FLTCFAGFWLIWGLIVLLCCF. Residues 31–269 are Cytoplasmic-facing; it reads CSFLRRRLKR…IPLFGRTTAV (239 aa). 2 disordered regions span residues 63 to 83 and 97 to 121; these read GSLA…RSRL and PLLH…PHPP. A Phosphoserine modification is found at Ser64. Over residues 108–117 the composition is skewed to basic residues; sequence AHPHPHHHAL. Residues 146–166 are required for internalization; it reads PCYEEAVLMAEPPPPYSEVLT. Residues 146–269 form a required for apoptosis induction region; it reads PCYEEAVLMA…IPLFGRTTAV (124 aa). A PDZ-binding motif is present at residues 267–269; it reads TAV.

Forms a complex with NMDA receptor zeta subunit GRIN1 and epsilon subunit GRIN2B. Interacts with GRIN2B. Interacts with GRIN1; the interaction is reduced upon NMDA receptor activity. Found in a postsynaptic membrane complex with DLG4 and GRIN1. Interacts with DLG4 (via PDZ3 domain and to lesser degree via PDZ2 domain). Interacts with JUN. Found in a complex with JUN and FBXW7. Interacts with JUN and FBXW7; the interaction inhibits ubiquitination-mediated JUN degradation promoting its phosphorylation and transcriptional activity. Interacts with SRC. Post-translationally, palmitoylated. In terms of processing, tyrosine phosphorylated, possibly by SRC. As to expression, highly expressed in brain, moderately expressed in lymph nodes and T cells and low expression in thymus and spleen. Expressed in single positive progenitor thymocytes, particularly in CD8 single positive thymocytes.

It localises to the cell membrane. The protein localises to the postsynaptic cell membrane. It is found in the postsynaptic density membrane. The protein resides in the cytoplasm. Its subcellular location is the perinuclear region. It localises to the synapse. The protein localises to the cell projection. It is found in the dendrite. The protein resides in the nucleus. Functionally, acts as a synapse-to-nucleus messenger to promote NMDA receptor-mediated excitotoxicity in neurons in a JUN-dependent manner. Inhibits ubiquitination-mediated degradation and promotes phosphorylation and transcriptional activity of transcription factor JUN. Might play a redundant role in the regulation of T cell receptor signaling. Might promote apoptosis in T cells. This chain is Proline-rich protein 7 (Prr7), found in Mus musculus (Mouse).